The sequence spans 614 residues: UvrABC system protein C (614 aa).

Residues 25–103 form the GIY-YIG domain; that stretch reads SVPGVYKMFG…IKSLKPKYNI (79 aa). The UVR domain maps to 214–249; the sequence is KEIQCELFEMMCRFSNNQDYESAIVCRDRLHALKSM.

It belongs to the UvrC family. In terms of assembly, interacts with UvrB in an incision complex.

The protein resides in the cytoplasm. Its function is as follows. The UvrABC repair system catalyzes the recognition and processing of DNA lesions. UvrC both incises the 5' and 3' sides of the lesion. The N-terminal half is responsible for the 3' incision and the C-terminal half is responsible for the 5' incision. This Anaplasma phagocytophilum (strain HZ) protein is UvrABC system protein C.